Here is a 167-residue protein sequence, read N- to C-terminus: Claudin domain-containing protein 2 (167 aa).

Transmembrane regions (helical) follow at residues 13 to 32, 61 to 81, 96 to 116, and 130 to 150; these read LLNL…NYWT, VSAA…GIGI, TIVL…VYTS, and YFFG…FLLA.

Belongs to the PMP-22/EMP/MP20 family.

The protein resides in the membrane. In Mus musculus (Mouse), this protein is Claudin domain-containing protein 2 (Cldnd2).